Reading from the N-terminus, the 47-residue chain is Photosystem II reaction center protein K (47 aa).

Residues 1 to 10 (MNIGFDMILA) constitute a propeptide that is removed on maturation. A helical transmembrane segment spans residues 22 to 42 (LVDVLPVIPLLFLLLAFVWQA).

It belongs to the PsbK family. In terms of assembly, PSII is composed of 1 copy each of membrane proteins PsbA, PsbB, PsbC, PsbD, PsbE, PsbF, PsbH, PsbI, PsbJ, PsbK, PsbL, PsbM, PsbT, PsbX, PsbY, PsbZ, Psb30/Ycf12, at least 3 peripheral proteins of the oxygen-evolving complex and a large number of cofactors. It forms dimeric complexes.

The protein localises to the plastid. It localises to the chloroplast thylakoid membrane. Functionally, one of the components of the core complex of photosystem II (PSII). PSII is a light-driven water:plastoquinone oxidoreductase that uses light energy to abstract electrons from H(2)O, generating O(2) and a proton gradient subsequently used for ATP formation. It consists of a core antenna complex that captures photons, and an electron transfer chain that converts photonic excitation into a charge separation. The sequence is that of Photosystem II reaction center protein K from Mesostigma viride (Green alga).